Here is a 48-residue protein sequence, read N- to C-terminus: DNA-directed RNA polymerase subunit Rpo12 (48 aa).

Zn(2+) is bound by residues Cys6, Cys9, Cys26, and Cys29.

It belongs to the archaeal Rpo12/eukaryotic RPC10 RNA polymerase subunit family. Part of the 13-subunit RNA polymerase. The cofactor is Zn(2+).

It is found in the cytoplasm. It catalyses the reaction RNA(n) + a ribonucleoside 5'-triphosphate = RNA(n+1) + diphosphate. Functionally, DNA-dependent RNA polymerase (RNAP) catalyzes the transcription of DNA into RNA using the four ribonucleoside triphosphates as substrates. This Sulfolobus acidocaldarius (strain ATCC 33909 / DSM 639 / JCM 8929 / NBRC 15157 / NCIMB 11770) protein is DNA-directed RNA polymerase subunit Rpo12.